We begin with the raw amino-acid sequence, 459 residues long: Cysteine--tRNA ligase (459 aa).

Residue Cys31 coordinates Zn(2+). The 'HIGH' region signature appears at Pro33–Asn43. 3 residues coordinate Zn(2+): Cys216, His241, and Glu245. Residues Lys274–Ser278 carry the 'KMSKS' region motif. Lys277 lines the ATP pocket.

The protein belongs to the class-I aminoacyl-tRNA synthetase family. Monomer. Requires Zn(2+) as cofactor.

It is found in the cytoplasm. The catalysed reaction is tRNA(Cys) + L-cysteine + ATP = L-cysteinyl-tRNA(Cys) + AMP + diphosphate. This is Cysteine--tRNA ligase from Rickettsia africae (strain ESF-5).